Here is a 150-residue protein sequence, read N- to C-terminus: Suppressor of HU sensitivity involved in recombination protein 1 (150 aa).

Component of the SHU complex composed of at least CSM2, PSY3, SHU1 and SHU2.

The protein resides in the nucleus. Plays a role in a RAD51/RAD54-dependent homologous recombination repair (HRR) pathway to repair MMS-induced lesions during S-phase. In Saccharomyces cerevisiae (strain ATCC 204508 / S288c) (Baker's yeast), this protein is Suppressor of HU sensitivity involved in recombination protein 1 (SHU1).